A 366-amino-acid polypeptide reads, in one-letter code: D-alanine--D-alanine ligase (366 aa).

In terms of domain architecture, ATP-grasp spans K145–E348. Position 175 to 230 (V175 to E230) interacts with ATP. Residues D302, E315, and N317 each contribute to the Mg(2+) site.

Belongs to the D-alanine--D-alanine ligase family. Mg(2+) is required as a cofactor. It depends on Mn(2+) as a cofactor.

The protein localises to the cytoplasm. The catalysed reaction is 2 D-alanine + ATP = D-alanyl-D-alanine + ADP + phosphate + H(+). The protein operates within cell wall biogenesis; peptidoglycan biosynthesis. Functionally, cell wall formation. The chain is D-alanine--D-alanine ligase from Proteus mirabilis (strain HI4320).